The following is a 642-amino-acid chain: Chaperone protein DnaK (642 aa).

Thr200 bears the Phosphothreonine; by autocatalysis mark. Residues 603–623 (AAAAEQGGNADAASGNAQASK) are compositionally biased toward low complexity. Positions 603 to 627 (AAAAEQGGNADAASGNAQASKAADD) are disordered.

This sequence belongs to the heat shock protein 70 family.

Functionally, acts as a chaperone. This Xanthomonas campestris pv. campestris (strain B100) protein is Chaperone protein DnaK.